A 452-amino-acid polypeptide reads, in one-letter code: Phosphoglucosamine mutase (452 aa).

The active-site Phosphoserine intermediate is serine 108. Mg(2+)-binding residues include serine 108, aspartate 247, aspartate 249, and aspartate 251. Serine 108 bears the Phosphoserine mark.

The protein belongs to the phosphohexose mutase family. Requires Mg(2+) as cofactor. In terms of processing, activated by phosphorylation.

The catalysed reaction is alpha-D-glucosamine 1-phosphate = D-glucosamine 6-phosphate. Functionally, catalyzes the conversion of glucosamine-6-phosphate to glucosamine-1-phosphate. This chain is Phosphoglucosamine mutase, found in Burkholderia thailandensis (strain ATCC 700388 / DSM 13276 / CCUG 48851 / CIP 106301 / E264).